A 258-amino-acid chain; its full sequence is uncharacterized protein (258 aa).

This is an uncharacterized protein from Caenorhabditis elegans.